We begin with the raw amino-acid sequence, 267 residues long: uncharacterized protein (267 aa).

The interval 72 to 267 is disordered; the sequence is LTENNNNNNT…EEKKKKKKKK (196 aa). Residues 122 to 145 show a composition bias toward low complexity; that stretch reads DSVSSSTTTTIITNNKKINNNNNN. Basic and acidic residues predominate over residues 159-175; sequence ENEKSVQKSKKEKESPK. Over residues 194 to 218 the composition is skewed to low complexity; the sequence is SESSSSSSSSSSSESSSSESESSSS.

This is an uncharacterized protein from Dictyostelium discoideum (Social amoeba).